The primary structure comprises 901 residues: Protein translocase subunit SecA 1 (901 aa).

Residues Q89, 107 to 111 (GEGKT), and D502 each bind ATP. Residues 856–875 (AEAKASGDARPGFVEDDPST) form a disordered region. Residues C885, C887, C896, and H897 each contribute to the Zn(2+) site.

The protein belongs to the SecA family. As to quaternary structure, monomer and homodimer. Part of the essential Sec protein translocation apparatus which comprises SecA, SecYEG and auxiliary proteins SecDF-YajC and YidC. It depends on Zn(2+) as a cofactor.

The protein resides in the cell inner membrane. The protein localises to the cytoplasm. It catalyses the reaction ATP + H2O + cellular proteinSide 1 = ADP + phosphate + cellular proteinSide 2.. Functionally, part of the Sec protein translocase complex. Interacts with the SecYEG preprotein conducting channel. Has a central role in coupling the hydrolysis of ATP to the transfer of proteins into and across the cell membrane, serving both as a receptor for the preprotein-SecB complex and as an ATP-driven molecular motor driving the stepwise translocation of polypeptide chains across the membrane. The protein is Protein translocase subunit SecA 1 of Ruegeria pomeroyi (strain ATCC 700808 / DSM 15171 / DSS-3) (Silicibacter pomeroyi).